The sequence spans 432 residues: Enolase (432 aa).

Position 166 (glutamine 166) interacts with (2R)-2-phosphoglycerate. Catalysis depends on glutamate 210, which acts as the Proton donor. Aspartate 247, glutamate 288, and aspartate 315 together coordinate Mg(2+). (2R)-2-phosphoglycerate contacts are provided by lysine 340, arginine 369, serine 370, and lysine 391. Lysine 340 functions as the Proton acceptor in the catalytic mechanism.

It belongs to the enolase family. Mg(2+) is required as a cofactor.

It localises to the cytoplasm. The protein resides in the secreted. Its subcellular location is the cell surface. It catalyses the reaction (2R)-2-phosphoglycerate = phosphoenolpyruvate + H2O. Its pathway is carbohydrate degradation; glycolysis; pyruvate from D-glyceraldehyde 3-phosphate: step 4/5. Functionally, catalyzes the reversible conversion of 2-phosphoglycerate (2-PG) into phosphoenolpyruvate (PEP). It is essential for the degradation of carbohydrates via glycolysis. In Aeropyrum pernix (strain ATCC 700893 / DSM 11879 / JCM 9820 / NBRC 100138 / K1), this protein is Enolase.